Here is a 336-residue protein sequence, read N- to C-terminus: tRNA N6-adenosine threonylcarbamoyltransferase (336 aa).

2 residues coordinate Fe cation: H114 and H118. Substrate contacts are provided by residues 136–140, D169, G182, D186, and N275; that span reads LVSGG. D301 contributes to the Fe cation binding site.

The protein belongs to the KAE1 / TsaD family. The cofactor is Fe(2+).

It localises to the cytoplasm. It carries out the reaction L-threonylcarbamoyladenylate + adenosine(37) in tRNA = N(6)-L-threonylcarbamoyladenosine(37) in tRNA + AMP + H(+). Required for the formation of a threonylcarbamoyl group on adenosine at position 37 (t(6)A37) in tRNAs that read codons beginning with adenine. Is involved in the transfer of the threonylcarbamoyl moiety of threonylcarbamoyl-AMP (TC-AMP) to the N6 group of A37, together with TsaE and TsaB. TsaD likely plays a direct catalytic role in this reaction. The sequence is that of tRNA N6-adenosine threonylcarbamoyltransferase from Streptococcus pneumoniae serotype 19F (strain G54).